A 438-amino-acid chain; its full sequence is Enolase (438 aa).

A (2R)-2-phosphoglycerate-binding site is contributed by Gln-163. Catalysis depends on Glu-205, which acts as the Proton donor. Mg(2+) is bound by residues Asp-243, Glu-292, and Asp-319. (2R)-2-phosphoglycerate is bound by residues Lys-344, Arg-373, Ser-374, and Lys-395. The active-site Proton acceptor is Lys-344.

The protein belongs to the enolase family. It depends on Mg(2+) as a cofactor.

It localises to the cytoplasm. Its subcellular location is the secreted. It is found in the cell surface. The catalysed reaction is (2R)-2-phosphoglycerate = phosphoenolpyruvate + H2O. It functions in the pathway carbohydrate degradation; glycolysis; pyruvate from D-glyceraldehyde 3-phosphate: step 4/5. Its function is as follows. Catalyzes the reversible conversion of 2-phosphoglycerate (2-PG) into phosphoenolpyruvate (PEP). It is essential for the degradation of carbohydrates via glycolysis. The chain is Enolase from Streptococcus agalactiae.